The following is a 507-amino-acid chain: MSFPQLGYQYIRPLYPPERPGAAGGGGGGSSAGGRSGPGAGASELAASGSLSNVLSSVYGAPYAAAAAAAAAAQGYGAFLPYATELPIFPQLGAQYELKDSPGVQHPATAAAFPHPHPAFYPYGQYQFGDPSRPKNATRESTSTLKAWLNEHRKNPYPTKGEKIMLAIITKMTLTQVSTWFANARRRLKKENKMTWAPRSRTDEEGNAYGSEREEEDEEEDEEESKRELEMEEEELAGEEEDTGGEGLADDDEDEEIDLENLDSAAAGSELTLAGAAHRNGDFGLGPISDCKTSDSDDSSEGLEDRPLSVLSLAPPPPPVARAPASPPSPPSSLDPCAPAPAPSSALQKPKIWSLAETATSPDNPRRSPPGAGGSPPGAAVAPPTLQLSPAAAAAAAAAHRLVSAPLGKFPAWTNRPFPGPPAGPRPHPLSMLGSAPQHLLGLPGAAGHPAAAAAAYARPAEPESGTDRCSALEVEKKLLKTAFQPVPRRPQNHLDAALVLSALSSS.

Positions 19 to 39 (RPGAAGGGGGGSSAGGRSGPG) are disordered. Residues 22 to 39 (AAGGGGGGSSAGGRSGPG) are compositionally biased toward gly residues. A DNA-binding region (homeobox; TALE-type) is located at residues 130–192 (DPSRPKNATR…NARRRLKKEN (63 aa)). 2 disordered regions span residues 193-398 (KMTW…AAAA) and 416-468 (RPFP…SGTD). Acidic residues-rich tracts occupy residues 213 to 223 (REEEDEEEDEE) and 230 to 261 (EMEE…DLEN). Pro residues-rich tracts occupy residues 314 to 342 (APPP…PAPA) and 418 to 428 (FPGPPAGPRPH). 2 positions are modified to phosphoserine: Ser326 and Ser329. The segment covering 436–460 (APQHLLGLPGAAGHPAAAAAAYARP) has biased composition (low complexity).

This sequence belongs to the TALE/IRO homeobox family. As to expression, expressed by neural progenitor cells in discrete domains of the ventral neural tube. Also expressed in specific and overlapping patterns with Irx1 and Irx2 in the developing and adult metanephric kidney. In the adult metanephros, renal expression is confined to the S3 segment of the proximal tubule, in the loop of Henle.

The protein localises to the nucleus. In terms of biological role, transcription factor involved in SHH-dependent neural patterning. Together with NKX2-2 and NKX6-1 acts to restrict the generation of motor neurons to the appropriate region of the neural tube. Belongs to the class I proteins of neuronal progenitor factors, which are repressed by SHH signals. Involved in the transcriptional repression of MNX1 in non-motor neuron cells. Acts as a regulator of energy metabolism. The polypeptide is Iroquois-class homeodomain protein IRX-3 (Irx3) (Mus musculus (Mouse)).